The following is a 931-amino-acid chain: Probable UDP-N-acetylglucosamine--peptide N-acetylglucosaminyltransferase SPINDLY (931 aa).

Over residues 1–15 (MAWTEKDVENGKESE) the composition is skewed to basic and acidic residues. A disordered region spans residues 1 to 38 (MAWTEKDVENGKESESLGNNGFLKGGQSSSGSKGSPGR). Positions 25 to 37 (GGQSSSGSKGSPG) are enriched in low complexity. TPR repeat units follow at residues 48–81 (DKDA…DSKS), 82–115 (IESL…DPQN), 116–149 (ACAL…DPSY), 157–190 (AIVL…DSHY), 191–224 (APAY…RPMY), 225–258 (AEAY…SPNF), 266–299 (AIAL…NWHY), 300–333 (ADAM…NPHC), 334–367 (AEAC…KPNF), 369–401 (QSLN…NPTY), and 402–435 (AEAY…DPDS). A catalytic region region spans residues 436 to 931 (RNAGQNRLLA…NHNGNHGNLS (496 aa)). Residues 864-884 (QQQQTQTESVVPEESSVNPSE) show a composition bias toward low complexity. The interval 864 to 931 (QQQQTQTESV…NHNGNHGNLS (68 aa)) is disordered. Positions 910–931 (KSSTSEENGVQSNHNGNHGNLS) are enriched in polar residues.

It belongs to the glycosyltransferase 41 family. O-GlcNAc transferase subfamily.

It is found in the nucleus. It carries out the reaction L-seryl-[protein] + UDP-N-acetyl-alpha-D-glucosamine = 3-O-(N-acetyl-beta-D-glucosaminyl)-L-seryl-[protein] + UDP + H(+). It catalyses the reaction L-threonyl-[protein] + UDP-N-acetyl-alpha-D-glucosamine = 3-O-(N-acetyl-beta-D-glucosaminyl)-L-threonyl-[protein] + UDP + H(+). Its pathway is protein modification; protein glycosylation. Probable O-linked N-acetylglucosamine transferase (OGT) involved in various processes such as gibberellin (GA) signaling pathway. OGTs catalyze the addition of nucleotide-activated sugars directly onto the polypeptide through O-glycosidic linkage with the hydroxyl of serine or threonine. Probably acts by adding O-linked sugars to yet unknown proteins. This Solanum lycopersicum (Tomato) protein is Probable UDP-N-acetylglucosamine--peptide N-acetylglucosaminyltransferase SPINDLY (SPY).